The sequence spans 74 residues: Sec-independent protein translocase protein TatA (74 aa).

The helical transmembrane segment at Met-1–Gly-21 threads the bilayer.

It belongs to the TatA/E family. As to quaternary structure, the Tat system comprises two distinct complexes: a TatABC complex, containing multiple copies of TatA, TatB and TatC subunits, and a separate TatA complex, containing only TatA subunits. Substrates initially bind to the TatABC complex, which probably triggers association of the separate TatA complex to form the active translocon.

It is found in the cell inner membrane. In terms of biological role, part of the twin-arginine translocation (Tat) system that transports large folded proteins containing a characteristic twin-arginine motif in their signal peptide across membranes. TatA could form the protein-conducting channel of the Tat system. This chain is Sec-independent protein translocase protein TatA, found in Nitrosospira multiformis (strain ATCC 25196 / NCIMB 11849 / C 71).